The primary structure comprises 378 residues: Protein RecA (378 aa).

79–86 (GPESSGKT) contributes to the ATP binding site.

It belongs to the RecA family.

The protein localises to the cytoplasm. Can catalyze the hydrolysis of ATP in the presence of single-stranded DNA, the ATP-dependent uptake of single-stranded DNA by duplex DNA, and the ATP-dependent hybridization of homologous single-stranded DNAs. It interacts with LexA causing its activation and leading to its autocatalytic cleavage. The sequence is that of Protein RecA from Streptococcus pyogenes serotype M1.